The sequence spans 152 residues: Eukaryotic translation initiation factor 2 subunit 3 (152 aa).

At alanine 1 the chain carries N-acetylalanine. GTP is bound at residue 51–54; sequence NKID.

This sequence belongs to the TRAFAC class translation factor GTPase superfamily. Classic translation factor GTPase family. EIF2G subfamily. Eukaryotic translation initiation factor 2 eIF2 is a heterotrimeric complex composed of an alpha (EIF2S1), a beta (EIF2S2) and a gamma (EIF2S3) chain. eIF2 is member of the 43S pre-initiation complex (43S PIC). Interacts (via C-terminus) with CDC123; the interaction is direct.

The protein resides in the cytoplasm. The protein localises to the cytosol. In terms of biological role, member of the eIF2 complex that functions in the early steps of protein synthesis by forming a ternary complex with GTP and initiator tRNA. This complex binds to a 40S ribosomal subunit, followed by mRNA binding to form the 43S pre-initiation complex (43S PIC). Junction of the 60S ribosomal subunit to form the 80S initiation complex is preceded by hydrolysis of the GTP bound to eIF2 and release of an eIF2-GDP binary complex. In order for eIF2 to recycle and catalyze another round of initiation, the GDP bound to eIF2 must exchange with GTP by way of a reaction catalyzed by eIF-2B. This is Eukaryotic translation initiation factor 2 subunit 3 (EIF2S3) from Oryctolagus cuniculus (Rabbit).